Reading from the N-terminus, the 150-residue chain is D-aminoacyl-tRNA deacylase (150 aa).

The short motif at Gly138–Pro139 is the Gly-cisPro motif, important for rejection of L-amino acids element.

The protein belongs to the DTD family. In terms of assembly, homodimer.

The protein resides in the cytoplasm. It carries out the reaction glycyl-tRNA(Ala) + H2O = tRNA(Ala) + glycine + H(+). The enzyme catalyses a D-aminoacyl-tRNA + H2O = a tRNA + a D-alpha-amino acid + H(+). An aminoacyl-tRNA editing enzyme that deacylates mischarged D-aminoacyl-tRNAs. Also deacylates mischarged glycyl-tRNA(Ala), protecting cells against glycine mischarging by AlaRS. Acts via tRNA-based rather than protein-based catalysis; rejects L-amino acids rather than detecting D-amino acids in the active site. By recycling D-aminoacyl-tRNA to D-amino acids and free tRNA molecules, this enzyme counteracts the toxicity associated with the formation of D-aminoacyl-tRNA entities in vivo and helps enforce protein L-homochirality. The polypeptide is D-aminoacyl-tRNA deacylase (Petrotoga mobilis (strain DSM 10674 / SJ95)).